Reading from the N-terminus, the 305-residue chain is Probable branched-chain-amino-acid aminotransferase (305 aa).

Residue K156 is modified to N6-(pyridoxal phosphate)lysine.

The protein belongs to the class-IV pyridoxal-phosphate-dependent aminotransferase family. It depends on pyridoxal 5'-phosphate as a cofactor.

The enzyme catalyses L-leucine + 2-oxoglutarate = 4-methyl-2-oxopentanoate + L-glutamate. It carries out the reaction L-isoleucine + 2-oxoglutarate = (S)-3-methyl-2-oxopentanoate + L-glutamate. The catalysed reaction is L-valine + 2-oxoglutarate = 3-methyl-2-oxobutanoate + L-glutamate. It functions in the pathway amino-acid biosynthesis; L-isoleucine biosynthesis; L-isoleucine from 2-oxobutanoate: step 4/4. Its pathway is amino-acid biosynthesis; L-leucine biosynthesis; L-leucine from 3-methyl-2-oxobutanoate: step 4/4. It participates in amino-acid biosynthesis; L-valine biosynthesis; L-valine from pyruvate: step 4/4. Its function is as follows. Acts on leucine, isoleucine and valine. This chain is Probable branched-chain-amino-acid aminotransferase (ilvE), found in Synechocystis sp. (strain ATCC 27184 / PCC 6803 / Kazusa).